Consider the following 321-residue polypeptide: Probable endolytic peptidoglycan transglycosylase RlpA (321 aa).

It belongs to the RlpA family.

In terms of biological role, lytic transglycosylase with a strong preference for naked glycan strands that lack stem peptides. This chain is Probable endolytic peptidoglycan transglycosylase RlpA, found in Synechocystis sp. (strain ATCC 27184 / PCC 6803 / Kazusa).